Reading from the N-terminus, the 240-residue chain is Methylthioribulose-1-phosphate dehydratase (240 aa).

Cys99 contributes to the substrate binding site. His116 and His118 together coordinate Zn(2+). Glu145 acts as the Proton donor/acceptor in catalysis. Residue His201 coordinates Zn(2+).

Belongs to the aldolase class II family. MtnB subfamily. It depends on Zn(2+) as a cofactor.

The protein localises to the cytoplasm. The catalysed reaction is 5-(methylsulfanyl)-D-ribulose 1-phosphate = 5-methylsulfanyl-2,3-dioxopentyl phosphate + H2O. It functions in the pathway amino-acid biosynthesis; L-methionine biosynthesis via salvage pathway; L-methionine from S-methyl-5-thio-alpha-D-ribose 1-phosphate: step 2/6. Catalyzes the dehydration of methylthioribulose-1-phosphate (MTRu-1-P) into 2,3-diketo-5-methylthiopentyl-1-phosphate (DK-MTP-1-P). The chain is Methylthioribulose-1-phosphate dehydratase from Paracoccidioides brasiliensis (strain Pb03).